Consider the following 288-residue polypeptide: Fe-S cluster assembly protein dre2 (288 aa).

Positions Met-1 to Val-127 are N-terminal SAM-like domain. Positions Pro-128–Asp-177 are linker. Positions 185, 196, 199, and 201 each coordinate [2Fe-2S] cluster. Residues Cys-185–Cys-201 are fe-S binding site A. [4Fe-4S] cluster-binding residues include Cys-244, Cys-247, Cys-255, and Cys-258. Short sequence motifs (cx2C motif) lie at residues Cys-244–Cys-247 and Cys-255–Cys-258. Positions Cys-244–Cys-258 are fe-S binding site B.

The protein belongs to the anamorsin family. In terms of assembly, monomer. Interacts with tah18. Interacts with tim40. [2Fe-2S] cluster is required as a cofactor. It depends on [4Fe-4S] cluster as a cofactor.

The protein resides in the cytoplasm. It localises to the mitochondrion intermembrane space. Component of the cytosolic iron-sulfur (Fe-S) protein assembly (CIA) machinery required for the maturation of extramitochondrial Fe-S proteins. Part of an electron transfer chain functioning in an early step of cytosolic Fe-S biogenesis, facilitating the de novo assembly of a [4Fe-4S] cluster on the scaffold complex cfd1-nbp35. Electrons are transferred to dre2 from NADPH via the FAD- and FMN-containing protein tah18. Tah18-dre2 are also required for the assembly of the diferric tyrosyl radical cofactor of ribonucleotide reductase (RNR), probably by providing electrons for reduction during radical cofactor maturation in the catalytic small subunit suc22. The polypeptide is Fe-S cluster assembly protein dre2 (Schizosaccharomyces pombe (strain 972 / ATCC 24843) (Fission yeast)).